We begin with the raw amino-acid sequence, 195 residues long: Acireductone dioxygenase 2 (195 aa).

Fe(2+)-binding residues include His-94, His-96, Glu-100, and His-139. Ni(2+)-binding residues include His-94, His-96, Glu-100, and His-139.

The protein belongs to the acireductone dioxygenase (ARD) family. Fe(2+) is required as a cofactor. Requires Ni(2+) as cofactor.

The protein resides in the cytoplasm. Its subcellular location is the nucleus. The enzyme catalyses 1,2-dihydroxy-5-(methylsulfanyl)pent-1-en-3-one + O2 = 4-methylsulfanyl-2-oxobutanoate + formate + 2 H(+). The catalysed reaction is 1,2-dihydroxy-5-(methylsulfanyl)pent-1-en-3-one + O2 = 3-(methylsulfanyl)propanoate + CO + formate + 2 H(+). Its pathway is amino-acid biosynthesis; L-methionine biosynthesis via salvage pathway; L-methionine from S-methyl-5-thio-alpha-D-ribose 1-phosphate: step 5/6. Functionally, catalyzes 2 different reactions between oxygen and the acireductone 1,2-dihydroxy-3-keto-5-methylthiopentene (DHK-MTPene) depending upon the metal bound in the active site. Fe-containing acireductone dioxygenase (Fe-ARD) produces formate and 2-keto-4-methylthiobutyrate (KMTB), the alpha-ketoacid precursor of methionine in the methionine recycle pathway. Ni-containing acireductone dioxygenase (Ni-ARD) produces methylthiopropionate, carbon monoxide and formate, and does not lie on the methionine recycle pathway. The chain is Acireductone dioxygenase 2 from Physcomitrium patens (Spreading-leaved earth moss).